The primary structure comprises 331 residues: Proton-translocating ferredoxin:NAD(+) oxidoreductase complex subunit D (331 aa).

A run of 3 helical transmembrane segments spans residues 23-43 (ESVS…AVFG), 44-64 (VFNF…AAVV), and 84-106 (AFLT…MVAI). Residue Thr-163 is modified to FMN phosphoryl threonine. 4 helical membrane passes run 196-216 (NGSI…YLIY), 226-246 (VVMI…TGIF), 251-271 (VFHM…TDMV), and 273-293 (IPMT…LTSL).

The protein belongs to the NqrB/RnfD family. The complex is composed of six subunits: RnfA, RnfB, RnfC, RnfD, RnfE and RnfG. Requires FMN as cofactor.

It localises to the cell membrane. Part of a membrane-bound complex that couples electron transfer with translocation of ions across the membrane. Couples electron transfer from reduced ferredoxin to NAD(+) with translocation of H(+) out of the cell. Essential for energy conservation during autotrophic growth. Contributes to ATP synthesis during heterotrophic growth. The protein is Proton-translocating ferredoxin:NAD(+) oxidoreductase complex subunit D of Clostridium ljungdahlii (strain ATCC 55383 / DSM 13528 / PETC).